Reading from the N-terminus, the 218-residue chain is Probable transaldolase (218 aa).

Lysine 84 acts as the Schiff-base intermediate with substrate in catalysis.

This sequence belongs to the transaldolase family. Type 3B subfamily.

The protein localises to the cytoplasm. The enzyme catalyses D-sedoheptulose 7-phosphate + D-glyceraldehyde 3-phosphate = D-erythrose 4-phosphate + beta-D-fructose 6-phosphate. The protein operates within carbohydrate degradation; pentose phosphate pathway; D-glyceraldehyde 3-phosphate and beta-D-fructose 6-phosphate from D-ribose 5-phosphate and D-xylulose 5-phosphate (non-oxidative stage): step 2/3. Its function is as follows. Transaldolase is important for the balance of metabolites in the pentose-phosphate pathway. The protein is Probable transaldolase of Bartonella henselae (strain ATCC 49882 / DSM 28221 / CCUG 30454 / Houston 1) (Rochalimaea henselae).